A 621-amino-acid chain; its full sequence is tRNA uridine 5-carboxymethylaminomethyl modification enzyme MnmG (621 aa).

11–16 (GGGHAG) serves as a coordination point for FAD. 270–284 (GPRYCPSIEDKINRF) provides a ligand contact to NAD(+).

The protein belongs to the MnmG family. Homodimer. Heterotetramer of two MnmE and two MnmG subunits. FAD serves as cofactor.

The protein localises to the cytoplasm. Functionally, NAD-binding protein involved in the addition of a carboxymethylaminomethyl (cmnm) group at the wobble position (U34) of certain tRNAs, forming tRNA-cmnm(5)s(2)U34. The sequence is that of tRNA uridine 5-carboxymethylaminomethyl modification enzyme MnmG from Helicobacter pylori (strain Shi470).